The chain runs to 223 residues: N-acetylmuramic acid 6-phosphate phosphatase (223 aa).

The active-site Nucleophile is the Asp-9. Mg(2+)-binding residues include Asp-9, Asp-11, and Asp-168. Asp-11 functions as the Proton donor in the catalytic mechanism.

Belongs to the HAD-like hydrolase superfamily. CbbY/CbbZ/Gph/YieH family. Phosphatase MupP subfamily. It depends on Mg(2+) as a cofactor.

The enzyme catalyses N-acetyl-D-muramate 6-phosphate + H2O = N-acetyl-D-muramate + phosphate. The protein operates within cell wall biogenesis; peptidoglycan recycling. Its function is as follows. Specifically catalyzes the dephosphorylation of N-acetylmuramate 6-phosphate (MurNAc-6P) to MurNac. Is involved in peptidoglycan recycling as part of a cell wall recycling pathway that bypasses de novo biosynthesis of the peptidoglycan precursor UDP-MurNAc. Plays a role in intrinsic resistance to fosfomycin, which targets the de novo synthesis of UDP-MurNAc. Shows a very low activity on GlcNAc-6P, and neither alpha-1-phosphorylated MurNAc, GlcNAc, or glucose nor glucosamine-6P or glucose-6P can be used as a substrate. This chain is N-acetylmuramic acid 6-phosphate phosphatase, found in Pseudomonas putida (strain ATCC 47054 / DSM 6125 / CFBP 8728 / NCIMB 11950 / KT2440).